The following is a 358-amino-acid chain: MEMRICLLAGDGIGPEIMEQGVRVLETVAGKFGHDMEFTDALIGGAAIDETGDPLPQETVEACKAAQAVLLGAVGGPRWDNLTGAERPEAGLLGIRKALGLFANLRPAKLFPELASACFLRPDIVANGIDVMVVRELTGGIYFGTPAGEETRDGLRTAFNTMVYNEEEVRRIARVAFEAARKRSGRVCSVDKANVLAVSRLWREIVTATHADEFPDVELSHMYVDNAAMQLVRDPSQFDVIVTGNLFGDILSDEASVITGSIGMLPSASLGAGGPGLFEPIHGSAPDIAGQNKANPLATILSTAMMLRHSFGLEKEAEAVEGAVQQVLKAGYRTGDIMDQGGTLVGCNTMGNLVNERI.

Position 76–89 (76–89) interacts with NAD(+); it reads GPRWDNLTGAERPE. Arginine 96, arginine 106, arginine 135, and aspartate 225 together coordinate substrate. Residues aspartate 225, aspartate 249, and aspartate 253 each coordinate Mg(2+). Residue 283 to 295 coordinates NAD(+); it reads GSAPDIAGQNKAN.

It belongs to the isocitrate and isopropylmalate dehydrogenases family. LeuB type 1 subfamily. As to quaternary structure, homodimer. Requires Mg(2+) as cofactor. The cofactor is Mn(2+).

It localises to the cytoplasm. The enzyme catalyses (2R,3S)-3-isopropylmalate + NAD(+) = 4-methyl-2-oxopentanoate + CO2 + NADH. It participates in amino-acid biosynthesis; L-leucine biosynthesis; L-leucine from 3-methyl-2-oxobutanoate: step 3/4. In terms of biological role, catalyzes the oxidation of 3-carboxy-2-hydroxy-4-methylpentanoate (3-isopropylmalate) to 3-carboxy-4-methyl-2-oxopentanoate. The product decarboxylates to 4-methyl-2 oxopentanoate. The polypeptide is 3-isopropylmalate dehydrogenase (Oleidesulfovibrio alaskensis (strain ATCC BAA-1058 / DSM 17464 / G20) (Desulfovibrio alaskensis)).